Consider the following 282-residue polypeptide: Aquaporin PIP-type (282 aa).

Helical transmembrane passes span 39 to 61 (WRAA…ATVI) and 74 to 96 (GLLG…TAGI). Residues 102–104 (NPA) carry the NPA 1 motif. The next 4 membrane-spanning stretches (helical) occupy residues 116–138 (SLLR…VGLV), 159–181 (GYNK…YTVF), 201–223 (LPIG…TGIN), and 243–265 (HWIF…QYVL). Residues 223–225 (NPA) carry the NPA 2 motif.

The protein belongs to the MIP/aquaporin (TC 1.A.8) family. PIP (TC 1.A.8.11) subfamily.

Its subcellular location is the membrane. Functionally, water-specific channel. The sequence is that of Aquaporin PIP-type from Atriplex canescens (Fourwing saltbush).